The chain runs to 231 residues: Large ribosomal subunit protein uL1 (231 aa).

This sequence belongs to the universal ribosomal protein uL1 family. As to quaternary structure, part of the 50S ribosomal subunit.

In terms of biological role, binds directly to 23S rRNA. The L1 stalk is quite mobile in the ribosome, and is involved in E site tRNA release. Functionally, protein L1 is also a translational repressor protein, it controls the translation of the L11 operon by binding to its mRNA. This chain is Large ribosomal subunit protein uL1, found in Polaromonas sp. (strain JS666 / ATCC BAA-500).